A 478-amino-acid polypeptide reads, in one-letter code: Calcium/calmodulin-dependent protein kinase type II subunit alpha (478 aa).

A Phosphotyrosine modification is found at Tyr-13. Positions 13–271 (YQLFEELGKG…AAEALKHPWI (259 aa)) constitute a Protein kinase domain. ATP contacts are provided by residues 19-27 (LGKGAFSVV) and Lys-42. The active-site Proton acceptor is Asp-135. Position 257 is a phosphoserine (Ser-257). Phosphothreonine; by autocatalysis is present on Thr-286. Residues 290–300 (LKKFNARRKLK) form a calmodulin-binding region. The tract at residues 310-320 (TRNFSGGKSGG) is interaction with BAALC. The segment at 314 to 341 (SGGKSGGNKKSDGVKESSESTNTTIEDE) is disordered. Over residues 322–331 (KKSDGVKESS) the composition is skewed to basic and acidic residues. Phosphoserine occurs at positions 330, 331, and 333. 2 positions are modified to phosphothreonine: Thr-336 and Thr-337. Ser-404 is modified (phosphoserine).

Belongs to the protein kinase superfamily. CAMK Ser/Thr protein kinase family. CaMK subfamily. In terms of assembly, there are 4 genes encoding calcium/calmodulin-dependent protein kinase type II chains: CAMK2A, CAMK2B, CAMK2G and CAMK2D. The corresponding proteins assemble into homo- or heteromultimeric holoenzymes composed of 12 subunits with two hexameric rings stacked one on top of the other. Interacts with BAALC. Interacts with MPDZ. Interacts with SYN1. Interacts with CAMK2N2. Interacts with SYNGAP1. Interacts with SYNPO2. Interacts with SHANK3. Interacts with GRIN2B. Interacts with CACNB2. Interacts with LRRC7. Interacts with GRM5. Interacts with DAGLA (via C-terminal); this interaction is enhanced by autophosphorylation of CAMK2A at Thr-286. Interacts with CAMK2N1; this interaction requires CAMK2A activation by Ca(2+). Requires Mg(2+) as cofactor. Autophosphorylation of Thr-286 following activation by Ca(2+)/calmodulin. Phosphorylation of Thr-286 locks the kinase into an activated state. In terms of processing, palmitoylated. Probably palmitoylated by ZDHHC3 and ZDHHC7.

Its subcellular location is the synapse. It localises to the postsynaptic density. The protein resides in the cell projection. The protein localises to the dendritic spine. It is found in the dendrite. It carries out the reaction L-seryl-[protein] + ATP = O-phospho-L-seryl-[protein] + ADP + H(+). The enzyme catalyses L-threonyl-[protein] + ATP = O-phospho-L-threonyl-[protein] + ADP + H(+). With respect to regulation, activated by Ca(2+)/calmodulin. Binding of calmodulin results in conformational change that relieves intrasteric autoinhibition and allows autophosphorylation of Thr-286 which turns the kinase in a constitutively active form and confers to the kinase a Ca(2+)-independent activity. Its function is as follows. Calcium/calmodulin-dependent protein kinase that functions autonomously after Ca(2+)/calmodulin-binding and autophosphorylation, and is involved in various processes, such as synaptic plasticity, neurotransmitter release and long-term potentiation. Member of the NMDAR signaling complex in excitatory synapses, it regulates NMDAR-dependent potentiation of the AMPAR and therefore excitatory synaptic transmission. Regulates dendritic spine development. Also regulates the migration of developing neurons. Phosphorylates the transcription factor FOXO3 to activate its transcriptional activity. Phosphorylates the transcription factor ETS1 in response to calcium signaling, thereby decreasing ETS1 affinity for DNA. In response to interferon-gamma (IFN-gamma) stimulation, catalyzes phosphorylation of STAT1, stimulating the JAK-STAT signaling pathway. In response to interferon-beta (IFN-beta) stimulation, stimulates the JAK-STAT signaling pathway. Acts as a negative regulator of 2-arachidonoylglycerol (2-AG)-mediated synaptic signaling via modulation of DAGLA activity. The protein is Calcium/calmodulin-dependent protein kinase type II subunit alpha (CAMK2A) of Pongo abelii (Sumatran orangutan).